Here is a 191-residue protein sequence, read N- to C-terminus: Potassium-transporting ATPase KdpC subunit (191 aa).

The chain crosses the membrane as a helical span at residues Leu-8–Val-28.

The protein belongs to the KdpC family. In terms of assembly, the system is composed of three essential subunits: KdpA, KdpB and KdpC.

It is found in the cell inner membrane. Part of the high-affinity ATP-driven potassium transport (or Kdp) system, which catalyzes the hydrolysis of ATP coupled with the electrogenic transport of potassium into the cytoplasm. This subunit acts as a catalytic chaperone that increases the ATP-binding affinity of the ATP-hydrolyzing subunit KdpB by the formation of a transient KdpB/KdpC/ATP ternary complex. This is Potassium-transporting ATPase KdpC subunit from Pectobacterium atrosepticum (strain SCRI 1043 / ATCC BAA-672) (Erwinia carotovora subsp. atroseptica).